A 258-amino-acid chain; its full sequence is Acetylglutamate kinase (258 aa).

Substrate is bound by residues 41–42 (GG), arginine 63, and asparagine 156.

This sequence belongs to the acetylglutamate kinase family. ArgB subfamily.

The protein resides in the cytoplasm. It catalyses the reaction N-acetyl-L-glutamate + ATP = N-acetyl-L-glutamyl 5-phosphate + ADP. The protein operates within amino-acid biosynthesis; L-arginine biosynthesis; N(2)-acetyl-L-ornithine from L-glutamate: step 2/4. Its function is as follows. Catalyzes the ATP-dependent phosphorylation of N-acetyl-L-glutamate. The sequence is that of Acetylglutamate kinase from Bacillus licheniformis (strain ATCC 14580 / DSM 13 / JCM 2505 / CCUG 7422 / NBRC 12200 / NCIMB 9375 / NCTC 10341 / NRRL NRS-1264 / Gibson 46).